A 668-amino-acid chain; its full sequence is tRNA 5-methylaminomethyl-2-thiouridine biosynthesis bifunctional protein MnmC (668 aa).

The segment at methionine 1–glutamate 245 is tRNA (mnm(5)s(2)U34)-methyltransferase. Positions isoleucine 270 to glycine 668 are FAD-dependent cmnm(5)s(2)U34 oxidoreductase.

It in the N-terminal section; belongs to the methyltransferase superfamily. tRNA (mnm(5)s(2)U34)-methyltransferase family. In the C-terminal section; belongs to the DAO family. The cofactor is FAD.

The protein resides in the cytoplasm. It carries out the reaction 5-aminomethyl-2-thiouridine(34) in tRNA + S-adenosyl-L-methionine = 5-methylaminomethyl-2-thiouridine(34) in tRNA + S-adenosyl-L-homocysteine + H(+). Functionally, catalyzes the last two steps in the biosynthesis of 5-methylaminomethyl-2-thiouridine (mnm(5)s(2)U) at the wobble position (U34) in tRNA. Catalyzes the FAD-dependent demodification of cmnm(5)s(2)U34 to nm(5)s(2)U34, followed by the transfer of a methyl group from S-adenosyl-L-methionine to nm(5)s(2)U34, to form mnm(5)s(2)U34. In Escherichia coli (strain SMS-3-5 / SECEC), this protein is tRNA 5-methylaminomethyl-2-thiouridine biosynthesis bifunctional protein MnmC.